Reading from the N-terminus, the 553-residue chain is Dihydroxy-acid dehydratase (553 aa).

Residue aspartate 78 coordinates Mg(2+). Cysteine 119 contributes to the [2Fe-2S] cluster binding site. Mg(2+) is bound by residues aspartate 120 and lysine 121. N6-carboxylysine is present on lysine 121. Cysteine 193 serves as a coordination point for [2Fe-2S] cluster. Glutamate 441 is a Mg(2+) binding site. Serine 467 (proton acceptor) is an active-site residue.

The protein belongs to the IlvD/Edd family. In terms of assembly, homodimer. [2Fe-2S] cluster is required as a cofactor. Mg(2+) serves as cofactor.

It catalyses the reaction (2R)-2,3-dihydroxy-3-methylbutanoate = 3-methyl-2-oxobutanoate + H2O. The catalysed reaction is (2R,3R)-2,3-dihydroxy-3-methylpentanoate = (S)-3-methyl-2-oxopentanoate + H2O. It functions in the pathway amino-acid biosynthesis; L-isoleucine biosynthesis; L-isoleucine from 2-oxobutanoate: step 3/4. Its pathway is amino-acid biosynthesis; L-valine biosynthesis; L-valine from pyruvate: step 3/4. Its function is as follows. Functions in the biosynthesis of branched-chain amino acids. Catalyzes the dehydration of (2R,3R)-2,3-dihydroxy-3-methylpentanoate (2,3-dihydroxy-3-methylvalerate) into 2-oxo-3-methylpentanoate (2-oxo-3-methylvalerate) and of (2R)-2,3-dihydroxy-3-methylbutanoate (2,3-dihydroxyisovalerate) into 2-oxo-3-methylbutanoate (2-oxoisovalerate), the penultimate precursor to L-isoleucine and L-valine, respectively. This is Dihydroxy-acid dehydratase from Geobacter sp. (strain M21).